The primary structure comprises 429 residues: Trigger factor (429 aa).

The region spanning 164–249 is the PPIase FKBP-type domain; the sequence is GDTAVIDFEG…VKEVKTKVLP (86 aa).

This sequence belongs to the FKBP-type PPIase family. Tig subfamily.

It localises to the cytoplasm. The catalysed reaction is [protein]-peptidylproline (omega=180) = [protein]-peptidylproline (omega=0). Functionally, involved in protein export. Acts as a chaperone by maintaining the newly synthesized protein in an open conformation. Functions as a peptidyl-prolyl cis-trans isomerase. This chain is Trigger factor, found in Lysinibacillus sphaericus (strain C3-41).